Consider the following 175-residue polypeptide: 3-hydroxydecanoyl-[acyl-carrier-protein] dehydratase (175 aa).

Residue His-71 is part of the active site.

It belongs to the thioester dehydratase family. FabA subfamily. As to quaternary structure, homodimer.

The protein resides in the cytoplasm. It carries out the reaction a (3R)-hydroxyacyl-[ACP] = a (2E)-enoyl-[ACP] + H2O. The catalysed reaction is (3R)-hydroxydecanoyl-[ACP] = (2E)-decenoyl-[ACP] + H2O. The enzyme catalyses (2E)-decenoyl-[ACP] = (3Z)-decenoyl-[ACP]. It participates in lipid metabolism; fatty acid biosynthesis. Necessary for the introduction of cis unsaturation into fatty acids. Catalyzes the dehydration of (3R)-3-hydroxydecanoyl-ACP to E-(2)-decenoyl-ACP and then its isomerization to Z-(3)-decenoyl-ACP. Can catalyze the dehydratase reaction for beta-hydroxyacyl-ACPs with saturated chain lengths up to 16:0, being most active on intermediate chain length. The sequence is that of 3-hydroxydecanoyl-[acyl-carrier-protein] dehydratase from Rhodopseudomonas palustris (strain BisB5).